Reading from the N-terminus, the 347-residue chain is MVCALGIEGSANKIGIGIIRDGKVLANVRRTYITPPGEGFLPKETAKHHREAILGLVESSLKEAQLKSSDLDVICYTKGPGMAPPLLVGAIVARTLSLLWNIPLLGVNHCIGHIEMGRLITGAQNPTVLYVSGGNTQVIAYSNKRYRIFGETIDIAVGNCLDRFARIIKLSNDPSPGYNIEQLAKSSNRYIKLPYVVKGMDVSFSGILSYIEDLAEPGKRQNKRKKPQEEEVNNYSQADLCYSLQETIFAMLVEITERAMAHCGSNEVLIVGGVGCNERLQEMMRIMCEERGGKLFATDERYCIDNGLMIAHAGAEMFRSGTRMPFEESYVTQRFRTDEVLVSWRDD.

The a divalent metal cation site is built by His-109, His-113, and Tyr-130. Substrate-binding positions include 130 to 134 (YVSGG), Asp-162, Gly-177, Glu-181, and Asn-277. An a divalent metal cation-binding site is contributed by Asp-305.

Belongs to the KAE1 / TsaD family. In terms of assembly, component of the EKC/KEOPS complex; the whole complex dimerizes. A divalent metal cation is required as a cofactor.

The protein resides in the cytoplasm. The protein localises to the nucleus. It catalyses the reaction L-threonylcarbamoyladenylate + adenosine(37) in tRNA = N(6)-L-threonylcarbamoyladenosine(37) in tRNA + AMP + H(+). Its function is as follows. Component of the EKC/KEOPS complex that is required for the formation of a threonylcarbamoyl group on adenosine at position 37 (t(6)A37) in tRNAs that read codons beginning with adenine. The complex is probably involved in the transfer of the threonylcarbamoyl moiety of threonylcarbamoyl-AMP (TC-AMP) to the N6 group of A37. Likely plays a direct catalytic role in this reaction, but requires other protein(s) of the complex to fulfill this activity. The sequence is that of Probable tRNA N6-adenosine threonylcarbamoyltransferase from Drosophila melanogaster (Fruit fly).